Consider the following 535-residue polypeptide: Importin subunit alpha-2 (535 aa).

Residues 1 to 58 enclose the IBB domain; the sequence is MSLRPNAKTEVRRNRYKVAVDAEEGRRRREDNMVEIRKSKREESLQKKRREGLQANQL. Residues 20 to 46 show a composition bias toward basic and acidic residues; it reads VDAEEGRRRREDNMVEIRKSKREESLQ. Positions 20-67 are disordered; sequence VDAEEGRRRREDNMVEIRKSKREESLQKKRREGLQANQLPQFAPSPVP. ARM repeat units lie at residues 67–106, 110–150, 153–192, 195–235, 237–276, 279–318, 321–361, 364–403, 407–446, and 461–500; these read PASS…KLLS, SPPI…NIAS, SENT…NVAG, PRCR…NFCR, KPQP…YLSD, NDKI…NIVT, DLQT…NITA, RDQI…NATS, PDQI…NILK, and NFYA…TYWL.

It belongs to the importin alpha family. In terms of assembly, forms a complex with the importin subunit beta-1 KPNB1. Interacts with A.tumefaciens VirD2 and VirE2. Binds to SWO1.

It is found in the nucleus envelope. In terms of biological role, binds to conventional NLS motifs and mediates nuclear protein import across the nuclear envelope. Involved in the maintenance of cell wall integrity under salt stress via interaction with SWO1. Acts as a cellular receptor for the nuclear import of the virD2 protein of Agrobacterium, but is not essential for Agrobacterium-mediated root transformation. The chain is Importin subunit alpha-2 from Arabidopsis thaliana (Mouse-ear cress).